Consider the following 229-residue polypeptide: Large ribosomal subunit protein uL1 (229 aa).

The protein belongs to the universal ribosomal protein uL1 family. In terms of assembly, part of the 50S ribosomal subunit.

Its function is as follows. Binds directly to 23S rRNA. The L1 stalk is quite mobile in the ribosome, and is involved in E site tRNA release. Protein L1 is also a translational repressor protein, it controls the translation of the L11 operon by binding to its mRNA. The polypeptide is Large ribosomal subunit protein uL1 (Clostridium beijerinckii (strain ATCC 51743 / NCIMB 8052) (Clostridium acetobutylicum)).